The sequence spans 412 residues: Orcinol synthase (412 aa).

Residues C164, H322, and N355 contribute to the active site.

Belongs to the thiolase-like superfamily. Chalcone/stilbene synthases family. As to quaternary structure, homodimer. In terms of tissue distribution, mainly expressed in young leaves, and barely in mature leaves and twigs.

The enzyme catalyses 3 malonyl-CoA + acetyl-CoA + 3 H(+) = orcinol + 4 CO2 + 4 CoA. It catalyses the reaction 3 malonyl-CoA + acetyl-CoA + 2 H(+) = orsellinate + 3 CO2 + 4 CoA. It carries out the reaction 3 malonyl-CoA + acetyl-CoA + 3 H(+) = tetraacetate lactone + 3 CO2 + 4 CoA. The catalysed reaction is 2 malonyl-CoA + acetyl-CoA + 2 H(+) = triacetate lactone + 2 CO2 + 3 CoA. The enzyme catalyses 3 malonyl-CoA + acetyl-CoA + 3 H(+) = 2-acetylphloroglucinol + 3 CO2 + 4 CoA. It participates in secondary metabolite biosynthesis; terpenoid biosynthesis. In terms of biological role, involved in the biosynthesis of acetate-derived aromatic tetraketides natural products, precursors of daurichromenic acid, an anti-human immunodeficiency viruses (HIV) meroterpenoid consisting of sesquiterpene and orsellinic acid (OSA) moieties. Accepts acetyl-CoA as starter substrate and produces orcinol as the major reaction product, along with four minor products including OSA, tetraacetate lactone, triacetate lactone and 2-acetylphloroglucinol. This chain is Orcinol synthase, found in Rhododendron dauricum (Azalea daurica).